The following is a 182-amino-acid chain: Epoxyqueuosine reductase QueH (182 aa).

4 residues coordinate [4Fe-4S] cluster: C10, C11, C85, and C88. C165 and C167 form a disulfide bridge.

The protein belongs to the QueH family.

The enzyme catalyses epoxyqueuosine(34) in tRNA + AH2 = queuosine(34) in tRNA + A + H2O. Its pathway is tRNA modification; tRNA-queuosine biosynthesis. Functionally, catalyzes the conversion of epoxyqueuosine (oQ) to queuosine (Q), which is a hypermodified base found in the wobble positions of tRNA(Asp), tRNA(Asn), tRNA(His) and tRNA(Tyr). The protein is Epoxyqueuosine reductase QueH of Dehalococcoides mccartyi (strain ATCC BAA-2266 / KCTC 15142 / 195) (Dehalococcoides ethenogenes (strain 195)).